A 403-amino-acid chain; its full sequence is S-adenosylmethionine synthase (403 aa).

His16 is an ATP binding site. Asp18 is a binding site for Mg(2+). Glu44 lines the K(+) pocket. 2 residues coordinate L-methionine: Glu57 and Gln100. Residues Gln100–His110 form a flexible loop region. ATP-binding positions include Asp167 to Lys169, Arg238 to Phe239, Asp247, Arg253 to Lys254, Ala270, and Lys274. Asp247 provides a ligand contact to L-methionine. Position 278 (Lys278) interacts with L-methionine.

This sequence belongs to the AdoMet synthase family. Homotetramer; dimer of dimers. Mg(2+) is required as a cofactor. It depends on K(+) as a cofactor.

The protein resides in the cytoplasm. The enzyme catalyses L-methionine + ATP + H2O = S-adenosyl-L-methionine + phosphate + diphosphate. The protein operates within amino-acid biosynthesis; S-adenosyl-L-methionine biosynthesis; S-adenosyl-L-methionine from L-methionine: step 1/1. Catalyzes the formation of S-adenosylmethionine (AdoMet) from methionine and ATP. The overall synthetic reaction is composed of two sequential steps, AdoMet formation and the subsequent tripolyphosphate hydrolysis which occurs prior to release of AdoMet from the enzyme. In Verminephrobacter eiseniae (strain EF01-2), this protein is S-adenosylmethionine synthase.